A 318-amino-acid polypeptide reads, in one-letter code: Isoflavone reductase (318 aa).

Residues 11–17 (GPTGAIG), Arg36, and Lys44 each bind NADP(+). Lys144 (proton acceptor) is an active-site residue. Arg148 contacts NADP(+).

The protein belongs to the NmrA-type oxidoreductase family. Isoflavone reductase subfamily.

The catalysed reaction is (3R)-vestitone + NADP(+) = 2'-hydroxyformononetin + NADPH + 2 H(+). Its pathway is phytoalexin biosynthesis; pterocarpan phytoalexin biosynthesis. Reduces achiral isoflavones to chiral isoflavanones during the biosynthesis of chiral pterocarpan phytoalexins. The reduction product is a third isomer, which represents the penultimate intermediate in the synthesis of the phytoalexin (-)-medicarpin, the major phytoalexin in Alfalfa. The sequence is that of Isoflavone reductase from Medicago sativa (Alfalfa).